Here is a 106-residue protein sequence, read N- to C-terminus: Transcriptional and immune response regulator (106 aa).

Monomer. Interacts with NOTCH2 (via ANK repeats), the interaction inhibits the nuclear translocation of NOTCH2 N2ICD. Interacts (C-terminus) with CBY1 (C-terminus), TCIM competes with CTNNB1 for the interaction with CBY1. Expressed in liver, expression levels decrease in regenerating liver. In bone marrow, expressed in large progenitor-like cells, cells with ring-shaped nuclei and, at lower, levels in hematopietic stem cell-like cells with round nuclei (at protein level).

The protein localises to the cytoplasm. It is found in the nucleus. Its subcellular location is the nucleolus. The protein resides in the nucleus speckle. Functionally, seems to be involved in the regulation of cell growth an differentiation, may play different and opposite roles depending on the tissue or cell type. May enhance the WNT-CTNNB1 pathway by relieving antagonistic activity of CBY1. Enhances the proliferation of follicular dendritic cells. Plays a role in the mitogen-activated MAPK2/3 signaling pathway, positively regulates G1-to-S-phase transition of the cell cycle. In endothelial cells, enhances key inflammatory mediators and inflammatory response through the modulation of NF-kappaB transcriptional regulatory activity. Involved in the regulation of heat shock response, seems to play a positive feedback with HSF1 to modulate heat-shock downstream gene expression. Plays a role in the regulation of hematopoiesis even if the mechanisms are unknown. In cancers such as thyroid or lung cancer, it has been described as promoter of cell proliferation, G1-to-S-phase transition and inhibitor of apoptosis. However, it negatively regulates self-renewal of liver cancer cells via suppresion of NOTCH2 signaling. In Mus musculus (Mouse), this protein is Transcriptional and immune response regulator.